Reading from the N-terminus, the 379-residue chain is Cytochrome b (379 aa).

A run of 4 helical transmembrane segments spans residues 34 to 54 (FGSL…LLAM), 78 to 99 (WLIR…YFHI), 114 to 134 (WNTG…GYVL), and 179 to 199 (FFAL…IHLT). Heme b-binding residues include H84 and H98. Residues H183 and H197 each contribute to the heme b site. Position 202 (H202) interacts with a ubiquinone. A run of 4 helical transmembrane segments spans residues 227–247 (LKDI…TFFS), 289–309 (LGGV…PLLH), 321–341 (FSQV…WVGS), and 348–368 (FIAI…VLFP).

This sequence belongs to the cytochrome b family. As to quaternary structure, the cytochrome bc1 complex contains 11 subunits: 3 respiratory subunits (MT-CYB, CYC1 and UQCRFS1), 2 core proteins (UQCRC1 and UQCRC2) and 6 low-molecular weight proteins (UQCRH/QCR6, UQCRB/QCR7, UQCRQ/QCR8, UQCR10/QCR9, UQCR11/QCR10 and a cleavage product of UQCRFS1). This cytochrome bc1 complex then forms a dimer. Heme b serves as cofactor.

Its subcellular location is the mitochondrion inner membrane. In terms of biological role, component of the ubiquinol-cytochrome c reductase complex (complex III or cytochrome b-c1 complex) that is part of the mitochondrial respiratory chain. The b-c1 complex mediates electron transfer from ubiquinol to cytochrome c. Contributes to the generation of a proton gradient across the mitochondrial membrane that is then used for ATP synthesis. The protein is Cytochrome b (MT-CYB) of Apteryx australis (Southern brown kiwi).